The primary structure comprises 204 residues: Putative AgrB-like protein (204 aa).

Transmembrane regions (helical) follow at residues isoleucine 40–leucine 60, leucine 87–isoleucine 107, asparagine 111–alanine 131, and leucine 156–valine 176.

Belongs to the AgrB family.

It is found in the cell membrane. Functionally, may be involved in the proteolytic processing of a quorum sensing system signal molecule precursor. The chain is Putative AgrB-like protein from Listeria welshimeri serovar 6b (strain ATCC 35897 / DSM 20650 / CCUG 15529 / CIP 8149 / NCTC 11857 / SLCC 5334 / V8).